Here is a 793-residue protein sequence, read N- to C-terminus: Protein smoothened (793 aa).

Residues M1 to G32 form the signal peptide. At A33–Y237 the chain is on the extracellular side. Residues L35–P61 form a disordered region. The N-linked (GlcNAc...) asparagine glycan is linked to N38. 5 cysteine pairs are disulfide-bonded: C68–C182, C74–C138, C82–C131, C122–C158, and C151–C173. Positions G69–E185 constitute an FZ domain. Position 99 (D99) interacts with cholesterol. The N-linked (GlcNAc...) asparagine glycan is linked to N192. Intrachain disulfides connect C197/C217, C221/C299, and C318/C394. Residues I238 to A258 traverse the membrane as a helical segment. At D259 to R265 the chain is on the cytoplasmic side. The chain crosses the membrane as a helical span at residues Y266–L286. At A287–C318 the chain is on the extracellular side. A helical transmembrane segment spans residues V319–L339. At T340–S362 the chain is on the cytoplasmic side. Residues Y363–A383 traverse the membrane as a helical segment. Residues Q384–G406 are Extracellular-facing. Y398 lines the cholesterol pocket. A helical membrane pass occupies residues F407–V427. Topologically, residues M428–R455 are cytoplasmic. Residues L456–Y476 traverse the membrane as a helical segment. At D477–A528 the chain is on the extracellular side. A disulfide bond links C494 and C511. The N-linked (GlcNAc...) asparagine glycan is linked to N497. The chain crosses the membrane as a helical span at residues M529 to W549. Positions T542–I573 are interaction with BBS5 and BBS7. Topologically, residues R550 to F793 are cytoplasmic. Phosphoserine is present on residues S560, S578, and S594. The tract at residues A574–N657 is required for interaction with PRKACA. An interaction with DLG5 region spans residues Q585–T597. Residue T597 is modified to Phosphothreonine. S599 and S642 each carry phosphoserine. Phosphothreonine occurs at positions 644 and 648. S666 is modified (phosphoserine). Over residues G674–K684 the composition is skewed to basic residues. A disordered region spans residues G674–A703.

Belongs to the G-protein coupled receptor Fz/Smo family. As to quaternary structure, homodimer. Interacts (via C-terminus) with protein kinase A catalytic subunit PRKACA; interacts with free PRKACA subunits and the interaction leads to sequestration of PRKACA at the membrane, preventing PRKACA-mediated phosphorylation of GLI transcription factors. Interacts with ARRB2. Interacts with BBS5 and BBS7; the interactions are indicative for the association of SMO with the BBsome complex to facilitate ciliary localization of SMO. Interacts with KIF7, DLG5 and SDCBP. Interacts with GAS8/DRC4. Phosphorylation by GRK kinases is required for interaction with protein kinase A catalytic subunit PRKACA. In terms of tissue distribution, during early somite stages of embryonic development, modestly up-regulated in the cells of the node (at protein level).

It localises to the cell membrane. The protein localises to the cell projection. The protein resides in the cilium. In terms of biological role, g protein-coupled receptor which associates with the patched protein (PTCH) to transduce hedgehog protein signaling. Binding of sonic hedgehog (SHH) to its receptor patched prevents inhibition of smoothened (SMO) by patched. When active, SMO binds to and sequesters protein kinase A catalytic subunit PRKACA at the cell membrane, preventing PRKACA-mediated phosphorylation of GLI transcription factors which releases the GLI proteins from PRKACA-mediated inhibition and allows for transcriptional activation of hedgehog pathway target genes. Required for the accumulation of KIF7, GLI2 and GLI3 in the cilia. Interacts with DLG5 at the ciliary base to induce the accumulation of KIF7 and GLI2 at the ciliary tip for GLI2 activation. This chain is Protein smoothened (Smo), found in Mus musculus (Mouse).